The chain runs to 231 residues: uncharacterized protein (231 aa).

A run of 5 helical transmembrane segments spans residues 36 to 56 (SLLA…SFFI), 58 to 78 (SQVT…ALQW), 83 to 103 (APLN…TLTP), 143 to 163 (FTVM…ASLL), and 170 to 190 (SIVN…YILY).

The protein belongs to the BI1 family.

It localises to the cell membrane. This is an uncharacterized protein from Campylobacter jejuni subsp. jejuni serotype O:2 (strain ATCC 700819 / NCTC 11168).